The primary structure comprises 504 residues: Maturase K (504 aa).

The protein belongs to the intron maturase 2 family. MatK subfamily.

It localises to the plastid. It is found in the chloroplast. Its function is as follows. Usually encoded in the trnK tRNA gene intron. Probably assists in splicing its own and other chloroplast group II introns. This Barbarea vulgaris (Yellow rocket) protein is Maturase K.